The chain runs to 303 residues: UDP-3-O-acyl-N-acetylglucosamine deacetylase (303 aa).

Residues His-78, His-237, and Asp-241 each coordinate Zn(2+). Residue His-264 is the Proton donor of the active site.

Belongs to the LpxC family. The cofactor is Zn(2+).

It catalyses the reaction a UDP-3-O-[(3R)-3-hydroxyacyl]-N-acetyl-alpha-D-glucosamine + H2O = a UDP-3-O-[(3R)-3-hydroxyacyl]-alpha-D-glucosamine + acetate. The protein operates within glycolipid biosynthesis; lipid IV(A) biosynthesis; lipid IV(A) from (3R)-3-hydroxytetradecanoyl-[acyl-carrier-protein] and UDP-N-acetyl-alpha-D-glucosamine: step 2/6. Catalyzes the hydrolysis of UDP-3-O-myristoyl-N-acetylglucosamine to form UDP-3-O-myristoylglucosamine and acetate, the committed step in lipid A biosynthesis. This is UDP-3-O-acyl-N-acetylglucosamine deacetylase from Pseudomonas fluorescens (strain Pf0-1).